Here is a 368-residue protein sequence, read N- to C-terminus: Branched-chain-amino-acid aminotransferase (368 aa).

Position 101 (Arg101) interacts with pyridoxal 5'-phosphate. Lys204 is subject to N6-(pyridoxal phosphate)lysine. Pyridoxal 5'-phosphate contacts are provided by residues Tyr209, 271–272 (IT), and Thr314.

Belongs to the class-IV pyridoxal-phosphate-dependent aminotransferase family. In terms of assembly, homodimer. Requires pyridoxal 5'-phosphate as cofactor.

It carries out the reaction L-leucine + 2-oxoglutarate = 4-methyl-2-oxopentanoate + L-glutamate. The enzyme catalyses L-isoleucine + 2-oxoglutarate = (S)-3-methyl-2-oxopentanoate + L-glutamate. The catalysed reaction is L-valine + 2-oxoglutarate = 3-methyl-2-oxobutanoate + L-glutamate. Its pathway is amino-acid biosynthesis; L-isoleucine biosynthesis; L-isoleucine from 2-oxobutanoate: step 4/4. It functions in the pathway amino-acid biosynthesis; L-leucine biosynthesis; L-leucine from 3-methyl-2-oxobutanoate: step 4/4. It participates in amino-acid biosynthesis; L-valine biosynthesis; L-valine from pyruvate: step 4/4. Functionally, catalyzes the reversible transfers of an amino group from glutamate to the alpha-ketoacid of the respective amino acid in the final step in the biosynthesis of branchedchain amino acids. The sequence is that of Branched-chain-amino-acid aminotransferase (ilvE) from Mycobacterium tuberculosis (strain CDC 1551 / Oshkosh).